Consider the following 755-residue polypeptide: Thermostable beta-glucosidase B (755 aa).

Aspartate 231 is a catalytic residue.

Belongs to the glycosyl hydrolase 3 family.

The enzyme catalyses Hydrolysis of terminal, non-reducing beta-D-glucosyl residues with release of beta-D-glucose.. It functions in the pathway glycan metabolism; cellulose degradation. The polypeptide is Thermostable beta-glucosidase B (bglB) (Acetivibrio thermocellus (strain ATCC 27405 / DSM 1237 / JCM 9322 / NBRC 103400 / NCIMB 10682 / NRRL B-4536 / VPI 7372) (Clostridium thermocellum)).